Reading from the N-terminus, the 402-residue chain is MDVQERLDAILDITDSKICPHCLGRRFSDVMEGPGNRLRGERLVEKFSLHLEGPCLVCGDVFERLDEAALRVREKVDDLNLEYSSVLVGTRLPDDVLRIDEEIDRRLGIQVEGIKREVNRELGKRVTSILRCPADFESPDLVITVDLRGQIRVHVQINPIFIEGRYRKLVRGIPQTKWPCRSCRGRGCSRCDYTGKMYPTSVEELISEPVLEATGGSDSKFHGSGREDVDVRMLGTGRPFVLEIKEPAIRTPDLRALEDEINRRARGMVEVADLRFSSRNRKVELKESSRKKYKVYRAIVELEGAVSDEDLVKLEKLDLIRQRTPLRVSHRRADRIRERRVLEISWKRLDDHLELIIKAEGGLYIKELISGDSGRTEPSVSSILGVPARCASLDVLEVGEPA.

The THUMP domain occupies 37-159 (RLRGERLVEK…QIRVHVQINP (123 aa)). The active-site Nucleophile is the aspartate 228. Tyrosine 296 and tyrosine 364 together coordinate substrate.

It belongs to the pseudouridine synthase Pus10 family.

It catalyses the reaction uridine(54) in tRNA = pseudouridine(54) in tRNA. The enzyme catalyses uridine(55) in tRNA = pseudouridine(55) in tRNA. In terms of biological role, responsible for synthesis of pseudouridine from uracil-54 and uracil-55 in the psi GC loop of transfer RNAs. The chain is tRNA pseudouridine synthase Pus10 from Methanothermobacter marburgensis (strain ATCC BAA-927 / DSM 2133 / JCM 14651 / NBRC 100331 / OCM 82 / Marburg) (Methanobacterium thermoautotrophicum).